Here is a 474-residue protein sequence, read N- to C-terminus: Vasculin-like protein 1 (474 aa).

A disordered region spans residues 17-42; it reads QSAKSPTATFEKHGEHLPRGEGRFGV. A compositionally biased stretch (basic and acidic residues) spans 26 to 38; the sequence is FEKHGEHLPRGEG. 2 positions are modified to phosphoserine: S49 and S76. A disordered region spans residues 91-191; that stretch reads GNPSGWHSSS…VWENPPSAKQ (101 aa). Residues 116–128 are compositionally biased toward basic residues; that stretch reads NHRHWNGSFHSRK. The segment covering 136-154 has biased composition (basic and acidic residues); it reads PPMEIREEKKEDKVEKLQF. S202 carries the phosphoserine modification. The interval 238 to 371 is disordered; that stretch reads LVPKPVPPPS…EEGCHQNGLA (134 aa). Positions 262-277 are enriched in polar residues; it reads GSLSSSRESAFTSPIS. A compositionally biased stretch (low complexity) spans 291–312; it reads SSPKESPSSTTPPIEISSSRLT. Position 292 is a phosphoserine (S292). T301 is subject to Phosphothreonine. Basic and acidic residues-rich tracts occupy residues 317-346 and 356-365; these read RTTD…CDKL and EPKENGEEGC. At S382 the chain carries Phosphoserine. The interval 453-474 is disordered; the sequence is AEFEDSDTETSSSETSDDDAWK.

It belongs to the vasculin family.

The protein resides in the nucleus. Its function is as follows. Possible transcription factor. This is Vasculin-like protein 1 (GPBP1L1) from Homo sapiens (Human).